We begin with the raw amino-acid sequence, 339 residues long: D-erythrose-4-phosphate dehydrogenase (339 aa).

11 to 12 contacts NAD(+); the sequence is RI. Residues 153–155, R199, 212–213, and R235 contribute to the substrate site; these read SCT and TK. C154 serves as the catalytic Nucleophile. Residue N317 coordinates NAD(+).

The protein belongs to the glyceraldehyde-3-phosphate dehydrogenase family. Epd subfamily. As to quaternary structure, homotetramer.

The protein resides in the cytoplasm. It carries out the reaction D-erythrose 4-phosphate + NAD(+) + H2O = 4-phospho-D-erythronate + NADH + 2 H(+). It functions in the pathway cofactor biosynthesis; pyridoxine 5'-phosphate biosynthesis; pyridoxine 5'-phosphate from D-erythrose 4-phosphate: step 1/5. Its function is as follows. Catalyzes the NAD-dependent conversion of D-erythrose 4-phosphate to 4-phosphoerythronate. The polypeptide is D-erythrose-4-phosphate dehydrogenase (Shewanella frigidimarina (strain NCIMB 400)).